The sequence spans 395 residues: Obg-like ATPase 1 (395 aa).

The region spanning 22-280 is the OBG-type G domain; the sequence is LKVGILGLPN…MPEDERQKYL (259 aa). 31–36 contributes to the ATP binding site; that stretch reads NVGKST. The Mg(2+) site is built by S35 and T55. An ATP-binding site is contributed by L228. In terms of domain architecture, TGS spans 301-384; that stretch reads QLEYFFTSGE…QDGDVIFFKF (84 aa).

It belongs to the TRAFAC class OBG-HflX-like GTPase superfamily. OBG GTPase family. YchF/OLA1 subfamily. In terms of assembly, monomer. Mg(2+) is required as a cofactor. In terms of tissue distribution, expressed in the nervous system, pharyngeal muscles and intestine (at protein level).

The protein resides in the cytoplasm. Functionally, hydrolyzes ATP, and can also hydrolyze GTP with lower efficiency. Has lower affinity for GTP. Plays a role in regulating starvation-induced thermotaxis responses in AFD thermosensory neurons. The polypeptide is Obg-like ATPase 1 (Caenorhabditis elegans).